The chain runs to 347 residues: Endothelin receptor type B (347 aa).

Topologically, residues 1 to 7 are extracellular; the sequence is EIKETFK. The helical transmembrane segment at 8 to 32 threads the bilayer; it reads YINTVVSCLVFVLGIIGNSTLLRII. Residues 33-43 lie on the Cytoplasmic side of the membrane; that stretch reads YKNKCMRNGPN. The helical transmembrane segment at 44-69 threads the bilayer; the sequence is ILIASLALGDLLHIIIDIPISVYKLL. Residues 70 to 81 lie on the Extracellular side of the membrane; the sequence is AEDWPFGVEMCK. An intrachain disulfide couples C80 to C161. Residues 82–103 traverse the membrane as a helical segment; sequence LVPFIQKASVGITVLSLCALSI. Topologically, residues 104–124 are cytoplasmic; it reads DRYRAVASWSRIKGIGVPKWT. Residues 125-149 traverse the membrane as a helical segment; it reads AVEIVLIWVISVVLAVPEAIAFDMI. Residues 150–177 are Extracellular-facing; sequence TMEYRGKDLRICLLHPTQKTSFMMFYKQ. A helical membrane pass occupies residues 178–202; that stretch reads AKDWWLFSFYFCLPLAITALFYTLM. The Cytoplasmic segment spans residues 203-230; sequence TCEMLRKKSGMQIALNDHLKQRREVAKT. Residues 231–256 form a helical membrane-spanning segment; it reads VFCLVLVFALCWLPLHLSRILKLTIY. Residues 257 to 268 lie on the Extracellular side of the membrane; it reads DQKDPNRCELLS. The chain crosses the membrane as a helical span at residues 269 to 295; the sequence is FFLVMDYIGINMASLNSCINPIALYLV. Topologically, residues 296–347 are cytoplasmic; that stretch reads SKRFQNCFKSCLCCWCQSKDLLSLEERQSCLKFKANDHGYDNFRSSNKYSSS. S-palmitoyl cysteine attachment occurs at residues C309 and C311.

Belongs to the G-protein coupled receptor 1 family. Endothelin receptor subfamily. EDNRB sub-subfamily.

The protein resides in the cell membrane. Non-specific receptor for endothelin 1, 2, and 3. Mediates its action by association with G proteins that activate a phosphatidylinositol-calcium second messenger system. The sequence is that of Endothelin receptor type B (EDNRB) from Coturnix japonica (Japanese quail).